Reading from the N-terminus, the 123-residue chain is MSITKDQILEAFAAMSVMEVVELIEAMEEKFGVSAAAAVVAGGAADAGAAAEEQTEFNVILTAHGDNKVAVIKAIRGATGLGLKEAKAMSEAAPVAVKEGVSKEEAEALKKELVEAGATVEIK.

The protein belongs to the bacterial ribosomal protein bL12 family. Homodimer. Part of the ribosomal stalk of the 50S ribosomal subunit. Forms a multimeric L10(L12)X complex, where L10 forms an elongated spine to which 2 to 4 L12 dimers bind in a sequential fashion. Binds GTP-bound translation factors.

Forms part of the ribosomal stalk which helps the ribosome interact with GTP-bound translation factors. Is thus essential for accurate translation. This chain is Large ribosomal subunit protein bL12, found in Shewanella sp. (strain MR-4).